A 143-amino-acid chain; its full sequence is Small ribosomal subunit protein bS18m (143 aa).

The protein belongs to the bacterial ribosomal protein bS18 family. In terms of assembly, component of the mitochondrial ribosome small subunit (28S) which comprises a 12S rRNA and about 30 distinct proteins.

Its subcellular location is the mitochondrion. This is Small ribosomal subunit protein bS18m (MRPS18C) from Bos taurus (Bovine).